The primary structure comprises 702 residues: Polyribonucleotide nucleotidyltransferase (702 aa).

Residues D485 and D491 each contribute to the Mg(2+) site. The 60-residue stretch at 552–611 (PKTSTLQIDPEKIRDVIGAGGKVINKIIADTGVKIDIKEDGLVYVSSAESEGVKEAVKII) folds into the KH domain. The S1 motif domain maps to 621–689 (GEIYLGKVTK…SQGRINLSRK (69 aa)).

This sequence belongs to the polyribonucleotide nucleotidyltransferase family. It depends on Mg(2+) as a cofactor.

It is found in the cytoplasm. The enzyme catalyses RNA(n+1) + phosphate = RNA(n) + a ribonucleoside 5'-diphosphate. Its function is as follows. Involved in mRNA degradation. Catalyzes the phosphorolysis of single-stranded polyribonucleotides processively in the 3'- to 5'-direction. The protein is Polyribonucleotide nucleotidyltransferase of Clostridium perfringens (strain 13 / Type A).